A 388-amino-acid polypeptide reads, in one-letter code: Formate-dependent phosphoribosylglycinamide formyltransferase (388 aa).

N(1)-(5-phospho-beta-D-ribosyl)glycinamide is bound by residues 21 to 22 (EL) and Glu-81. ATP is bound by residues Arg-113, Lys-154, 159–164 (SSGHGQ), 193–196 (EEFI), and Glu-201. Positions 118–306 (KFAAEELGLK…EFALHVRAVL (189 aa)) constitute an ATP-grasp domain. Positions 265 and 277 each coordinate Mg(2+). Residues Asp-284, Lys-352, and 359–360 (RR) each bind N(1)-(5-phospho-beta-D-ribosyl)glycinamide.

It belongs to the PurK/PurT family. In terms of assembly, homodimer.

It catalyses the reaction N(1)-(5-phospho-beta-D-ribosyl)glycinamide + formate + ATP = N(2)-formyl-N(1)-(5-phospho-beta-D-ribosyl)glycinamide + ADP + phosphate + H(+). The protein operates within purine metabolism; IMP biosynthesis via de novo pathway; N(2)-formyl-N(1)-(5-phospho-D-ribosyl)glycinamide from N(1)-(5-phospho-D-ribosyl)glycinamide (formate route): step 1/1. In terms of biological role, involved in the de novo purine biosynthesis. Catalyzes the transfer of formate to 5-phospho-ribosyl-glycinamide (GAR), producing 5-phospho-ribosyl-N-formylglycinamide (FGAR). Formate is provided by PurU via hydrolysis of 10-formyl-tetrahydrofolate. In Nitratiruptor sp. (strain SB155-2), this protein is Formate-dependent phosphoribosylglycinamide formyltransferase.